The primary structure comprises 37 residues: MLNFSLCLYPVFILNKLVLRTQSIILHTINNASIKNR.

A signal peptide spans 1 to 23 (MLNFSLCLYPVFILNKLVLRTQS).

It belongs to the orthopoxviruses VACWR204.5 protein family.

This is an uncharacterized protein from Vaccinia virus (strain Western Reserve) (VACV).